Consider the following 390-residue polypeptide: NADH-quinone oxidoreductase subunit D (390 aa).

This sequence belongs to the complex I 49 kDa subunit family. In terms of assembly, NDH-1 is composed of 14 different subunits. Subunits NuoB, C, D, E, F, and G constitute the peripheral sector of the complex.

The protein resides in the cell inner membrane. It carries out the reaction a quinone + NADH + 5 H(+)(in) = a quinol + NAD(+) + 4 H(+)(out). Its function is as follows. NDH-1 shuttles electrons from NADH, via FMN and iron-sulfur (Fe-S) centers, to quinones in the respiratory chain. The immediate electron acceptor for the enzyme in this species is believed to be ubiquinone. Couples the redox reaction to proton translocation (for every two electrons transferred, four hydrogen ions are translocated across the cytoplasmic membrane), and thus conserves the redox energy in a proton gradient. In Geotalea uraniireducens (strain Rf4) (Geobacter uraniireducens), this protein is NADH-quinone oxidoreductase subunit D.